Consider the following 145-residue polypeptide: D-aminoacyl-tRNA deacylase (145 aa).

Residues 137-138 (GP) carry the Gly-cisPro motif, important for rejection of L-amino acids motif.

This sequence belongs to the DTD family. In terms of assembly, homodimer.

The protein resides in the cytoplasm. It carries out the reaction glycyl-tRNA(Ala) + H2O = tRNA(Ala) + glycine + H(+). It catalyses the reaction a D-aminoacyl-tRNA + H2O = a tRNA + a D-alpha-amino acid + H(+). Functionally, an aminoacyl-tRNA editing enzyme that deacylates mischarged D-aminoacyl-tRNAs. Also deacylates mischarged glycyl-tRNA(Ala), protecting cells against glycine mischarging by AlaRS. Acts via tRNA-based rather than protein-based catalysis; rejects L-amino acids rather than detecting D-amino acids in the active site. By recycling D-aminoacyl-tRNA to D-amino acids and free tRNA molecules, this enzyme counteracts the toxicity associated with the formation of D-aminoacyl-tRNA entities in vivo and helps enforce protein L-homochirality. The protein is D-aminoacyl-tRNA deacylase of Serratia proteamaculans (strain 568).